Here is a 308-residue protein sequence, read N- to C-terminus: Sulfate adenylyltransferase subunit 2 (308 aa).

It belongs to the PAPS reductase family. CysD subfamily. In terms of assembly, heterodimer composed of CysD, the smaller subunit, and CysN.

The enzyme catalyses sulfate + ATP + H(+) = adenosine 5'-phosphosulfate + diphosphate. Its pathway is sulfur metabolism; hydrogen sulfide biosynthesis; sulfite from sulfate: step 1/3. Functionally, with CysN forms the ATP sulfurylase (ATPS) that catalyzes the adenylation of sulfate producing adenosine 5'-phosphosulfate (APS) and diphosphate, the first enzymatic step in sulfur assimilation pathway. APS synthesis involves the formation of a high-energy phosphoric-sulfuric acid anhydride bond driven by GTP hydrolysis by CysN coupled to ATP hydrolysis by CysD. The protein is Sulfate adenylyltransferase subunit 2 of Chromobacterium violaceum (strain ATCC 12472 / DSM 30191 / JCM 1249 / CCUG 213 / NBRC 12614 / NCIMB 9131 / NCTC 9757 / MK).